Here is a 28-residue protein sequence, read N- to C-terminus: Cytochrome b6-f complex subunit 6 (28 aa).

A helical membrane pass occupies residues 2–22 (VEYLVILSGMFGLALACFFGL).

Belongs to the PetL family. As to quaternary structure, the 4 large subunits of the cytochrome b6-f complex are cytochrome b6, subunit IV (17 kDa polypeptide, PetD), cytochrome f and the Rieske protein, while the 4 small subunits are PetG, PetL, PetM and PetN. The complex functions as a dimer.

The protein resides in the plastid. It localises to the cyanelle thylakoid membrane. Functionally, component of the cytochrome b6-f complex, which mediates electron transfer between photosystem II (PSII) and photosystem I (PSI), cyclic electron flow around PSI, and state transitions. PetL is important for photoautotrophic growth as well as for electron transfer efficiency and stability of the cytochrome b6-f complex. This Cyanophora paradoxa protein is Cytochrome b6-f complex subunit 6.